A 388-amino-acid chain; its full sequence is Beta-1,4-galactosyltransferase 5 (388 aa).

Topologically, residues 1–14 (MRARRGLLRLPRRS) are cytoplasmic. Residues 15-35 (LLAALFFFSLSSSLLYFVYVA) form a helical; Signal-anchor for type II membrane protein membrane-spanning segment. Residues 36-388 (PGIVNTYLFM…TPELAQVTEY (353 aa)) are Lumenal-facing. N-linked (GlcNAc...) asparagine glycans are attached at residues Asn-77, Asn-81, Asn-90, and Asn-128. Cys-114 and Cys-158 are oxidised to a cystine. UDP-alpha-D-galactose-binding positions include 169-173 (PFRNR), 208-210 (FNR), 235-236 (VD), Tyr-264, and Trp-296. The cysteines at positions 229 and 248 are disulfide-linked. Residue Asp-236 participates in Mn(2+) binding. 298–301 (GEDD) is a binding site for N-acetyl-D-glucosamine. Mn(2+) is bound at residue His-329. Residue 329–330 (HH) coordinates UDP-alpha-D-galactose. Residue Arg-340 participates in N-acetyl-D-glucosamine binding. 3 N-linked (GlcNAc...) asparagine glycosylation sites follow: Asn-360, Asn-364, and Asn-373.

The protein belongs to the glycosyltransferase 7 family. Mn(2+) is required as a cofactor. In terms of tissue distribution, highest levels in heart, brain, liver and kidney with lower levels in spleen, lung and testis.

It localises to the golgi apparatus. The protein localises to the golgi stack membrane. The catalysed reaction is a beta-D-glucosyl-(1&lt;-&gt;1')-N-acylsphing-4-enine + UDP-alpha-D-galactose = a beta-D-Gal-(1-&gt;4)-beta-D-Glc-(1&lt;-&gt;1)-Cer(d18:1(4E)) + UDP + H(+). It participates in protein modification; protein glycosylation. Its pathway is sphingolipid metabolism. Its function is as follows. Catalyzes the synthesis of lactosylceramide (LacCer) via the transfer of galactose from UDP-galactose to glucosylceramide (GlcCer). LacCer is the starting point in the biosynthesis of all gangliosides (membrane-bound glycosphingolipids) which play pivotal roles in the CNS including neuronal maturation and axonal and myelin formation. Plays a role in the glycosylation of BMPR1A and regulation of its protein stability. Essential for extraembryonic development during early embryogenesis. The sequence is that of Beta-1,4-galactosyltransferase 5 from Mus musculus (Mouse).